An 854-amino-acid polypeptide reads, in one-letter code: MSKNWFPLLCASVLVVYVSIASSSTGTASGAVTPTSPTENTTGPLIENTTLRTHEVFKINMSKFPYRVCSMAQGTDLLRFEQNINCDSFKPTKEDFEEGIMVVYKRDIRPYTFKVHMYQKILTFRQSYSFIRENHLLGFSQEHLAVPMWEVHYINKLNRCYNSVVRNVAGATYVNYHRDSYVNETMLLVEDDFSNTHSSRFVTVKELWHKPGSTWLYTTSCNVNCMVTVTTARSKYPYDFFVTSDGKVVDISPFYNGSNNKHFGENRDKFSVRKNYSMIAYYGRDNAPEVAHPLVGFFERPDVLMSWDIVEEANNTCEYTFWEQSERTIRSEADDTYHYTSSSMTATFLTSKEELNESDPSFQCIKDKANEQLQLIFNTSYNETYVQSGNVSMYETTGGLIVFWLPVKEKSILEMEELAVAYNNTNSSTRRKRSTDSASDSNKTSEEVLKSIVYAQLQYTYDTLRNYINRALRQIAEAWCKDQKRTLEVFKELSKINPSAMLSAIYDKPIAARFVGDVISLAKCVEVDQNSVKVLRDMRTKESGVCYSRPVVLYTFKNSSHVQYGQLGEYNEILLGRHRTEACEYPSLKIYIAGNSSYEYVDYLYKRMIPLDSISTVDTMISLDIDPLENTDFKALELYSEDELRSSNVFDLEDIMREFNTYKQRMIHVEGKVFDKVPGYLRGLDDMMSGLGSAGKALGVAIGAVGGAVASFVEGVVGFIKNPFGSFTVILFLLAVLGVIYLIYMRQKRAYEKPFEHFFPYVVPPTTVKEAPPSYEQSQYENIKEKAASATKEFSLEEAYQMLLALQKLDQEKRRKAEADDEDFASNGQSAGFLDRLRNRRRGGYQKIQNEYEV.

Residues 1-30 (MSKNWFPLLCASVLVVYVSIASSSTGTASG) form the signal peptide. The Virion surface segment spans residues 31–723 (AVTPTSPTEN…EGVVGFIKNP (693 aa)). N40, N48, and N60 each carry an N-linked (GlcNAc...) asparagine; by host glycan. 5 cysteine pairs are disulfide-bonded: C69-C524, C86-C480, C160-C225, C317-C364, and C546-C583. The interval 127–133 (SYSFIRE) is involved in fusion and/or binding to host membrane. N-linked (GlcNAc...) asparagine; by host glycosylation is present at N183. Residues 212 to 219 (GSTWLYTT) form an involved in fusion and/or binding to host membrane region. N-linked (GlcNAc...) asparagine; by host glycans are attached at residues N256, N275, N314, N356, N378, N382, N390, N423, N426, N442, N558, and N595. Hydrophobic membrane proximal region regions lie at residues 669-721 (VEGK…GFIK) and 700-720 (VAIG…VGFI). Residues 724–744 (FGSFTVILFLLAVLGVIYLIY) traverse the membrane as a helical segment. Residues 745-854 (MRQKRAYEKP…YQKIQNEYEV (110 aa)) lie on the Intravirion side of the membrane.

Belongs to the herpesviridae glycoprotein B family. In terms of assembly, homotrimer; disulfide-linked. Binds to heparan sulfate proteoglycans. Interacts with gH/gL heterodimer. Post-translationally, a proteolytic cleavage by host furin generates two subunits that remain linked by disulfide bonds.

Its subcellular location is the virion membrane. It localises to the host cell membrane. The protein localises to the host endosome membrane. The protein resides in the host Golgi apparatus membrane. Envelope glycoprotein that forms spikes at the surface of virion envelope. Essential for the initial attachment to heparan sulfate moieties of the host cell surface proteoglycans. Involved in fusion of viral and cellular membranes leading to virus entry into the host cell. Following initial binding to its host receptors, membrane fusion is mediated by the fusion machinery composed at least of gB and the heterodimer gH/gL. May be involved in the fusion between the virion envelope and the outer nuclear membrane during virion egress. The polypeptide is Envelope glycoprotein B (Macaca mulatta (Rhesus macaque)).